A 162-amino-acid polypeptide reads, in one-letter code: MSINATARALLLTEFVSAFFLTMRYFFQPKATINYPFEKNPISPRFRGEHALRRYPNGEERCIACKLCEAICPAQAITIEAGPRRNDGTRRTVRYDIDMVKCIYCGLCQEACPVDAIVEGPNFEFATETREELYYDKAKLLANGDRWEREIAKAIELDAPYR.

4Fe-4S ferredoxin-type domains follow at residues 52-82 (LRRY…IEAG) and 93-122 (VRYD…EGPN). 8 residues coordinate [4Fe-4S] cluster: C62, C65, C68, C72, C102, C105, C108, and C112.

The protein belongs to the complex I 23 kDa subunit family. In terms of assembly, NDH-1 is composed of 14 different subunits. Subunits NuoA, H, J, K, L, M, N constitute the membrane sector of the complex. [4Fe-4S] cluster serves as cofactor.

The protein resides in the cell inner membrane. It carries out the reaction a quinone + NADH + 5 H(+)(in) = a quinol + NAD(+) + 4 H(+)(out). Functionally, NDH-1 shuttles electrons from NADH, via FMN and iron-sulfur (Fe-S) centers, to quinones in the respiratory chain. The immediate electron acceptor for the enzyme in this species is believed to be ubiquinone. Couples the redox reaction to proton translocation (for every two electrons transferred, four hydrogen ions are translocated across the cytoplasmic membrane), and thus conserves the redox energy in a proton gradient. This Nitrobacter hamburgensis (strain DSM 10229 / NCIMB 13809 / X14) protein is NADH-quinone oxidoreductase subunit I.